The primary structure comprises 127 residues: Aspartate 1-decarboxylase (127 aa).

Ser-25 serves as the catalytic Schiff-base intermediate with substrate; via pyruvic acid. Ser-25 carries the post-translational modification Pyruvic acid (Ser). Thr-57 contributes to the substrate binding site. The active-site Proton donor is Tyr-58. 73 to 75 serves as a coordination point for substrate; the sequence is GAA.

It belongs to the PanD family. Heterooctamer of four alpha and four beta subunits. Pyruvate serves as cofactor. Is synthesized initially as an inactive proenzyme, which is activated by self-cleavage at a specific serine bond to produce a beta-subunit with a hydroxyl group at its C-terminus and an alpha-subunit with a pyruvoyl group at its N-terminus.

The protein resides in the cytoplasm. It catalyses the reaction L-aspartate + H(+) = beta-alanine + CO2. The protein operates within cofactor biosynthesis; (R)-pantothenate biosynthesis; beta-alanine from L-aspartate: step 1/1. Functionally, catalyzes the pyruvoyl-dependent decarboxylation of aspartate to produce beta-alanine. This chain is Aspartate 1-decarboxylase, found in Carboxydothermus hydrogenoformans (strain ATCC BAA-161 / DSM 6008 / Z-2901).